The sequence spans 336 residues: Glycerol-3-phosphate dehydrogenase [NAD(P)+] (336 aa).

Tryptophan 16 and lysine 109 together coordinate NADPH. Sn-glycerol 3-phosphate contacts are provided by lysine 109, glycine 137, and serine 139. Alanine 141 is a binding site for NADPH. Sn-glycerol 3-phosphate-binding residues include lysine 192, aspartate 245, serine 255, arginine 256, and asparagine 257. Lysine 192 serves as the catalytic Proton acceptor. Arginine 256 provides a ligand contact to NADPH. Residues valine 280 and glutamate 282 each coordinate NADPH.

This sequence belongs to the NAD-dependent glycerol-3-phosphate dehydrogenase family.

The protein localises to the cytoplasm. The enzyme catalyses sn-glycerol 3-phosphate + NAD(+) = dihydroxyacetone phosphate + NADH + H(+). The catalysed reaction is sn-glycerol 3-phosphate + NADP(+) = dihydroxyacetone phosphate + NADPH + H(+). It participates in membrane lipid metabolism; glycerophospholipid metabolism. Its function is as follows. Catalyzes the reduction of the glycolytic intermediate dihydroxyacetone phosphate (DHAP) to sn-glycerol 3-phosphate (G3P), the key precursor for phospholipid synthesis. The sequence is that of Glycerol-3-phosphate dehydrogenase [NAD(P)+] from Hyphomonas neptunium (strain ATCC 15444).